A 170-amino-acid polypeptide reads, in one-letter code: ATP synthase subunit b (170 aa).

A helical transmembrane segment spans residues Leu25 to Ile45. Residues Glu121–Ser147 are disordered. Positions Val122 to Gln139 are enriched in polar residues.

This sequence belongs to the ATPase B chain family. In terms of assembly, F-type ATPases have 2 components, F(1) - the catalytic core - and F(0) - the membrane proton channel. F(1) has five subunits: alpha(3), beta(3), gamma(1), delta(1), epsilon(1). F(0) has three main subunits: a(1), b(2) and c(10-14). The alpha and beta chains form an alternating ring which encloses part of the gamma chain. F(1) is attached to F(0) by a central stalk formed by the gamma and epsilon chains, while a peripheral stalk is formed by the delta and b chains.

Its subcellular location is the cell membrane. F(1)F(0) ATP synthase produces ATP from ADP in the presence of a proton or sodium gradient. F-type ATPases consist of two structural domains, F(1) containing the extramembraneous catalytic core and F(0) containing the membrane proton channel, linked together by a central stalk and a peripheral stalk. During catalysis, ATP synthesis in the catalytic domain of F(1) is coupled via a rotary mechanism of the central stalk subunits to proton translocation. Functionally, component of the F(0) channel, it forms part of the peripheral stalk, linking F(1) to F(0). In Mycolicibacterium smegmatis (strain ATCC 700084 / mc(2)155) (Mycobacterium smegmatis), this protein is ATP synthase subunit b.